The sequence spans 450 residues: Bestrophin homolog 1 (450 aa).

At 1 to 31 (MTINYHKEIMTSHPWTFFLLLFKWKGSIWKA) the chain is on the cytoplasmic side. Residues 32 to 51 (VYMETIIFLICYGIISVIYK) traverse the membrane as a helical segment. Residues 52-60 (TAMGESSQR) are Extracellular-facing. Residues 61-82 (TFESLVRYFDKRLSYIPLEFVL) form a helical membrane-spanning segment. Over 83–242 (GFFVTTVVNR…DWVPLPLMYP (160 aa)) the chain is Cytoplasmic. A helical transmembrane segment spans residues 243 to 260 (QLVCLAVNLYFLVSIIAR). Residues 261–278 (QLVIEKHKMVDEVDVYFP) are Extracellular-facing. Residues 279-292 (VMTFLQFIFYMGWL) form a helical membrane-spanning segment. The Cytoplasmic segment spans residues 293–450 (KVIDVMLNPF…WKIPTNPQKF (158 aa)). Residues Asn300, Asp305, and Asp308 each coordinate Ca(2+).

Belongs to the anion channel-forming bestrophin (TC 1.A.46) family. Calcium-sensitive chloride channel subfamily. In terms of assembly, forms oligomers.

It localises to the cell membrane. It catalyses the reaction chloride(in) = chloride(out). Ligand-gated anion channel that allows the movement of chloride monoatomic anions across cell membranes when activated by Calcium (Ca2+). In Caenorhabditis elegans, this protein is Bestrophin homolog 1 (best-1).